A 283-amino-acid chain; its full sequence is Pantothenate synthetase (283 aa).

Residue 30 to 37 coordinates ATP; that stretch reads MGALHRGH. His37 serves as the catalytic Proton donor. Gln61 serves as a coordination point for (R)-pantoate. Beta-alanine is bound at residue Gln61. An ATP-binding site is contributed by 147 to 150; the sequence is GQKD. Gln153 provides a ligand contact to (R)-pantoate. ATP-binding positions include Ile176 and 184–187; that span reads MSSR.

This sequence belongs to the pantothenate synthetase family. In terms of assembly, homodimer.

The protein resides in the cytoplasm. It carries out the reaction (R)-pantoate + beta-alanine + ATP = (R)-pantothenate + AMP + diphosphate + H(+). It participates in cofactor biosynthesis; (R)-pantothenate biosynthesis; (R)-pantothenate from (R)-pantoate and beta-alanine: step 1/1. Functionally, catalyzes the condensation of pantoate with beta-alanine in an ATP-dependent reaction via a pantoyl-adenylate intermediate. This Cytophaga hutchinsonii (strain ATCC 33406 / DSM 1761 / CIP 103989 / NBRC 15051 / NCIMB 9469 / D465) protein is Pantothenate synthetase.